The following is a 386-amino-acid chain: 2-deoxy-scyllo-inosose synthase (386 aa).

NAD(+) is bound by residues Asp-42, 73 to 76, 105 to 109, 129 to 130, 140 to 142, and 151 to 152; these read EVHK, GITGN, TT, SLK, and KN. The active site involves Lys-142. Glu-184 contacts Co(2+). Glu-244 is an active-site residue. Co(2+) is bound by residues His-247 and His-263.

It belongs to the sugar phosphate cyclases superfamily. DOI synthase family. The cofactor is NAD(+). Requires Co(2+) as cofactor.

The catalysed reaction is D-glucose 6-phosphate = 2-deoxy-L-scyllo-inosose + phosphate. Its pathway is metabolic intermediate biosynthesis; 2-deoxystreptamine biosynthesis; 2-deoxystreptamine from D-glucose 6-phosphate: step 1/4. It participates in antibiotic biosynthesis; paromomycin biosynthesis. Functionally, catalyzes the intramolecular carbocycle formation from D-glucose-6-phosphate to 2-deoxy-scyllo-inosose (DOI). The polypeptide is 2-deoxy-scyllo-inosose synthase (parC) (Streptomyces paromomycinus (Streptomyces rimosus subsp. paromomycinus)).